A 218-amino-acid chain; its full sequence is Phosphatidylserine decarboxylase proenzyme (218 aa).

The active-site Schiff-base intermediate with substrate; via pyruvic acid is the serine 188. Pyruvic acid (Ser); by autocatalysis is present on serine 188.

The protein belongs to the phosphatidylserine decarboxylase family. PSD-A subfamily. In terms of assembly, heterodimer of a large membrane-associated beta subunit and a small pyruvoyl-containing alpha subunit. Pyruvate serves as cofactor. Is synthesized initially as an inactive proenzyme. Formation of the active enzyme involves a self-maturation process in which the active site pyruvoyl group is generated from an internal serine residue via an autocatalytic post-translational modification. Two non-identical subunits are generated from the proenzyme in this reaction, and the pyruvate is formed at the N-terminus of the alpha chain, which is derived from the carboxyl end of the proenzyme. The post-translation cleavage follows an unusual pathway, termed non-hydrolytic serinolysis, in which the side chain hydroxyl group of the serine supplies its oxygen atom to form the C-terminus of the beta chain, while the remainder of the serine residue undergoes an oxidative deamination to produce ammonia and the pyruvoyl prosthetic group on the alpha chain.

It localises to the cell membrane. It catalyses the reaction a 1,2-diacyl-sn-glycero-3-phospho-L-serine + H(+) = a 1,2-diacyl-sn-glycero-3-phosphoethanolamine + CO2. It participates in phospholipid metabolism; phosphatidylethanolamine biosynthesis; phosphatidylethanolamine from CDP-diacylglycerol: step 2/2. Functionally, catalyzes the formation of phosphatidylethanolamine (PtdEtn) from phosphatidylserine (PtdSer). This Streptomyces coelicolor (strain ATCC BAA-471 / A3(2) / M145) protein is Phosphatidylserine decarboxylase proenzyme.